A 277-amino-acid chain; its full sequence is Glycerol-3-phosphate acyltransferase (277 aa).

A run of 5 helical transmembrane segments spans residues Phe-3–Val-23, Ile-55–Leu-75, Pro-79–Phe-99, Ile-111–Leu-131, and Leu-155–Leu-175. The tract at residues Lys-231–Glu-277 is disordered. 2 stretches are compositionally biased toward basic residues: residues Lys-240–Thr-253 and Lys-262–Lys-271.

It belongs to the PlsY family. Probably interacts with PlsX.

Its subcellular location is the cell inner membrane. It catalyses the reaction an acyl phosphate + sn-glycerol 3-phosphate = a 1-acyl-sn-glycero-3-phosphate + phosphate. Its pathway is lipid metabolism; phospholipid metabolism. In terms of biological role, catalyzes the transfer of an acyl group from acyl-phosphate (acyl-PO(4)) to glycerol-3-phosphate (G3P) to form lysophosphatidic acid (LPA). This enzyme utilizes acyl-phosphate as fatty acyl donor, but not acyl-CoA or acyl-ACP. The protein is Glycerol-3-phosphate acyltransferase of Legionella pneumophila (strain Lens).